A 473-amino-acid polypeptide reads, in one-letter code: Mogroside IIIx synthase (473 aa).

The active-site Proton acceptor is the histidine 21. Aspartate 123 acts as the Charge relay in catalysis. Residues threonine 274, glutamine 337, tryptophan 355, asparagine 356, serine 357, glutamate 360, aspartate 376, and glutamine 377 each coordinate UDP-alpha-D-glucose.

Belongs to the UDP-glycosyltransferase family. Highly expressed in mature fruits.

The enzyme catalyses mogroside IIE + UDP-alpha-D-glucose = mogroside IIIX + UDP + H(+). The catalysed reaction is mogroside III + UDP-alpha-D-glucose = siamenoside I + UDP + H(+). The protein operates within secondary metabolite biosynthesis; terpenoid biosynthesis. UDP-glycosyltransferase involved in the biosynthesis of cucurbitacin and mogroside tetracyclic triterpene natural products (e.g. siamenoside I and mogrosides IV, V and VI). Cucurbitacins have cytotoxic properties and exhibit deterrent taste as a defense barrier against herbivores. Mogrosides are nonsugar highly oxygenated compounds used as high-intensity zero-calorie sweeteners; they also possess pharmacological properties such as regulating immunity, lowering blood sugar and lipid levels, protecting the liver, and acting as antioxidants and antitumor agents. Catalyzes the branched glucosylations of mogroside II-E and mogroside III. The sequence is that of Mogroside IIIx synthase from Siraitia grosvenorii (Monk's fruit).